Here is a 238-residue protein sequence, read N- to C-terminus: tRNA (guanine-N(7)-)-methyltransferase (238 aa).

The S-adenosyl-L-methionine site is built by glutamate 68, glutamate 93, aspartate 120, and aspartate 143. The active site involves aspartate 143. Substrate-binding positions include lysine 147, aspartate 179, and 216 to 219; that span reads TKFE.

This sequence belongs to the class I-like SAM-binding methyltransferase superfamily. TrmB family.

The catalysed reaction is guanosine(46) in tRNA + S-adenosyl-L-methionine = N(7)-methylguanosine(46) in tRNA + S-adenosyl-L-homocysteine. It participates in tRNA modification; N(7)-methylguanine-tRNA biosynthesis. Its function is as follows. Catalyzes the formation of N(7)-methylguanine at position 46 (m7G46) in tRNA. In Shewanella frigidimarina (strain NCIMB 400), this protein is tRNA (guanine-N(7)-)-methyltransferase.